We begin with the raw amino-acid sequence, 557 residues long: Dihydroxy-acid dehydratase (557 aa).

Cys50 provides a ligand contact to [2Fe-2S] cluster. Asp82 provides a ligand contact to Mg(2+). Cys123 is a binding site for [2Fe-2S] cluster. The Mg(2+) site is built by Asp124 and Lys125. At Lys125 the chain carries N6-carboxylysine. Cys195 lines the [2Fe-2S] cluster pocket. Mg(2+) is bound at residue Glu447. Ser473 serves as the catalytic Proton acceptor.

The protein belongs to the IlvD/Edd family. Homodimer. The cofactor is [2Fe-2S] cluster. Mg(2+) serves as cofactor.

The catalysed reaction is (2R)-2,3-dihydroxy-3-methylbutanoate = 3-methyl-2-oxobutanoate + H2O. It carries out the reaction (2R,3R)-2,3-dihydroxy-3-methylpentanoate = (S)-3-methyl-2-oxopentanoate + H2O. The protein operates within amino-acid biosynthesis; L-isoleucine biosynthesis; L-isoleucine from 2-oxobutanoate: step 3/4. It participates in amino-acid biosynthesis; L-valine biosynthesis; L-valine from pyruvate: step 3/4. Functions in the biosynthesis of branched-chain amino acids. Catalyzes the dehydration of (2R,3R)-2,3-dihydroxy-3-methylpentanoate (2,3-dihydroxy-3-methylvalerate) into 2-oxo-3-methylpentanoate (2-oxo-3-methylvalerate) and of (2R)-2,3-dihydroxy-3-methylbutanoate (2,3-dihydroxyisovalerate) into 2-oxo-3-methylbutanoate (2-oxoisovalerate), the penultimate precursor to L-isoleucine and L-valine, respectively. The sequence is that of Dihydroxy-acid dehydratase from Burkholderia thailandensis (strain ATCC 700388 / DSM 13276 / CCUG 48851 / CIP 106301 / E264).